A 247-amino-acid chain; its full sequence is ATP synthase subunit a, chloroplastic (247 aa).

A run of 5 helical transmembrane segments spans residues glutamine 38–valine 58, valine 95–leucine 115, isoleucine 134–threonine 154, leucine 199–leucine 219, and glycine 220–glycine 240.

Belongs to the ATPase A chain family. As to quaternary structure, F-type ATPases have 2 components, CF(1) - the catalytic core - and CF(0) - the membrane proton channel. CF(1) has five subunits: alpha(3), beta(3), gamma(1), delta(1), epsilon(1). CF(0) has four main subunits: a, b, b' and c.

The protein resides in the plastid. Its subcellular location is the chloroplast thylakoid membrane. Key component of the proton channel; it plays a direct role in the translocation of protons across the membrane. The chain is ATP synthase subunit a, chloroplastic from Helianthus annuus (Common sunflower).